The chain runs to 311 residues: Avirulence protein ATR1 (311 aa).

The N-terminal stretch at methionine 1–alanine 15 is a signal peptide. Residues arginine 48 to arginine 62 carry the RxLR-dEER motif. WY domain stretches follow at residues aspartate 127–valine 209 and glutamate 210–valine 311.

Belongs to the RxLR effector family. In terms of assembly, monomer. Interacts with defense protein RPP1 from several ecotypes including RPP1-NdA, RPP1-WsB, RPP1-EstA and RPP1-ZdrA, via their leucine-rich repeats (LLRs).

The protein localises to the secreted. Its subcellular location is the host cytoplasm. Secreted effector that acts as an elicitor of hypersensitive response (HR) specifically on plants carrying both defense protein RPP1 from several ecotypes including RPP1-NdA, RPP1-WsB, RPP1-EstA and RPP1-ZdrA. The protein is Avirulence protein ATR1 of Hyaloperonospora arabidopsidis (strain Emoy2) (Downy mildew agent).